The sequence spans 135 residues: Ribosomal RNA large subunit methyltransferase H (135 aa).

S-adenosyl-L-methionine-binding positions include leucine 52, glycine 83, and 102-107; that span reads LSSLTL.

Belongs to the RNA methyltransferase RlmH family. Homodimer.

It is found in the cytoplasm. It carries out the reaction pseudouridine(1915) in 23S rRNA + S-adenosyl-L-methionine = N(3)-methylpseudouridine(1915) in 23S rRNA + S-adenosyl-L-homocysteine + H(+). In terms of biological role, specifically methylates the pseudouridine at position 1915 (m3Psi1915) in 23S rRNA. In Polynucleobacter necessarius subsp. necessarius (strain STIR1), this protein is Ribosomal RNA large subunit methyltransferase H.